The chain runs to 250 residues: MRRVLVAGNWKMHKTPSEARVWFAELKRLLPPLQSEAAVLPAFPILPVAKEVLAETQVGYGAQDVSAHKEGAYTGEVSARMLSDLGCRYAIVGHSERRRYHGETDALVAEKAKRLLEEGITPILCVGEPLEVREKGEAVPYTLRQLRGSLEGVEPPGPEALVIAYEPVWAIGTGKNATPEDAEAMHQAIRKALSERYGEAFASRVRILYGGSVNPKNFADLLSMPNVDGGLVGGASLELESFLALLRIAG.

9-11 (NWK) is a binding site for substrate. Catalysis depends on histidine 94, which acts as the Electrophile. The Proton acceptor role is filled by glutamate 166. Substrate is bound by residues glycine 172, serine 212, and 233–234 (GG).

It belongs to the triosephosphate isomerase family. Homodimer.

The protein localises to the cytoplasm. The enzyme catalyses D-glyceraldehyde 3-phosphate = dihydroxyacetone phosphate. It participates in carbohydrate biosynthesis; gluconeogenesis. The protein operates within carbohydrate degradation; glycolysis; D-glyceraldehyde 3-phosphate from glycerone phosphate: step 1/1. Its function is as follows. Involved in the gluconeogenesis. Catalyzes stereospecifically the conversion of dihydroxyacetone phosphate (DHAP) to D-glyceraldehyde-3-phosphate (G3P). In Thermus thermophilus (strain ATCC 27634 / DSM 579 / HB8), this protein is Triosephosphate isomerase.